Here is a 163-residue protein sequence, read N- to C-terminus: Peptide methionine sulfoxide reductase MsrA 1 (163 aa).

Residue Cys-21 is part of the active site.

It belongs to the MsrA Met sulfoxide reductase family.

It carries out the reaction L-methionyl-[protein] + [thioredoxin]-disulfide + H2O = L-methionyl-(S)-S-oxide-[protein] + [thioredoxin]-dithiol. The enzyme catalyses [thioredoxin]-disulfide + L-methionine + H2O = L-methionine (S)-S-oxide + [thioredoxin]-dithiol. Has an important function as a repair enzyme for proteins that have been inactivated by oxidation. Catalyzes the reversible oxidation-reduction of methionine sulfoxide in proteins to methionine. The protein is Peptide methionine sulfoxide reductase MsrA 1 (msrA1) of Nostoc sp. (strain PCC 7120 / SAG 25.82 / UTEX 2576).